A 410-amino-acid chain; its full sequence is Phosphoglycerate kinase (410 aa).

Substrate is bound by residues 24-26, Arg40, 63-66, Arg122, and Arg162; these read DLN and HLGR. ATP is bound by residues Lys212, Gly300, Glu331, and 360 to 363; that span reads GGDS.

The protein belongs to the phosphoglycerate kinase family. In terms of assembly, monomer.

The protein localises to the cytoplasm. The catalysed reaction is (2R)-3-phosphoglycerate + ATP = (2R)-3-phospho-glyceroyl phosphate + ADP. Its pathway is carbohydrate degradation; glycolysis; pyruvate from D-glyceraldehyde 3-phosphate: step 2/5. The sequence is that of Phosphoglycerate kinase from Nocardia farcinica (strain IFM 10152).